Here is a 325-residue protein sequence, read N- to C-terminus: Ribosomal RNA small subunit methyltransferase H (325 aa).

Residues 39–41 (GGH), Asp59, Phe90, Asp108, and Gln115 contribute to the S-adenosyl-L-methionine site.

It belongs to the methyltransferase superfamily. RsmH family.

It localises to the cytoplasm. The catalysed reaction is cytidine(1402) in 16S rRNA + S-adenosyl-L-methionine = N(4)-methylcytidine(1402) in 16S rRNA + S-adenosyl-L-homocysteine + H(+). Specifically methylates the N4 position of cytidine in position 1402 (C1402) of 16S rRNA. This is Ribosomal RNA small subunit methyltransferase H from Leptothrix cholodnii (strain ATCC 51168 / LMG 8142 / SP-6) (Leptothrix discophora (strain SP-6)).